A 456-amino-acid polypeptide reads, in one-letter code: Alcohol acyltransferase 16 (456 aa).

Catalysis depends on proton acceptor residues H167 and D382.

It belongs to the plant acyltransferase family. As to expression, expressed in fruit.

The enzyme catalyses 3-(methylsulfanyl)propanoyl-CoA + butan-1-ol = butyl 3-(methylsulfanyl)propanoate + CoA. It catalyses the reaction ethanol + benzoyl-CoA = ethyl benzoate + CoA. It carries out the reaction butan-1-ol + benzoyl-CoA = butyl benzoate + CoA. The catalysed reaction is 2-(methylsulfanyl)acetyl-CoA + butan-1-ol = butyl 2-(methylsulfanyl)acetate + CoA. Its function is as follows. Involved in the biosynthesis of volatile esters which confer kiwifruit flavor. Alcohol acyl transferase that can use a wide range of alcohols as substrate to produce esters. Exhibits benzoyl-CoA:alcohol O-acyltransferase activity. The polypeptide is Alcohol acyltransferase 16 (Actinidia chinensis var. chinensis (Chinese soft-hair kiwi)).